Reading from the N-terminus, the 465-residue chain is tRNA modification GTPase MnmE (465 aa).

(6S)-5-formyl-5,6,7,8-tetrahydrofolate is bound by residues arginine 21, glutamate 85, and lysine 124. A TrmE-type G domain is found at 220-387 (GVPVAIIGET…LQQRLVAAAH (168 aa)). Asparagine 230 is a K(+) binding site. GTP-binding positions include 230–235 (NAGKST), 249–255 (SDIHGTT), and 274–277 (DTAG). Serine 234 provides a ligand contact to Mg(2+). K(+)-binding residues include serine 249, isoleucine 251, and threonine 254. Threonine 255 is a binding site for Mg(2+). Lysine 465 contacts (6S)-5-formyl-5,6,7,8-tetrahydrofolate.

It belongs to the TRAFAC class TrmE-Era-EngA-EngB-Septin-like GTPase superfamily. TrmE GTPase family. Homodimer. Heterotetramer of two MnmE and two MnmG subunits. K(+) serves as cofactor.

The protein localises to the cytoplasm. Exhibits a very high intrinsic GTPase hydrolysis rate. Involved in the addition of a carboxymethylaminomethyl (cmnm) group at the wobble position (U34) of certain tRNAs, forming tRNA-cmnm(5)s(2)U34. The sequence is that of tRNA modification GTPase MnmE from Bacteroides fragilis (strain ATCC 25285 / DSM 2151 / CCUG 4856 / JCM 11019 / LMG 10263 / NCTC 9343 / Onslow / VPI 2553 / EN-2).